Here is a 204-residue protein sequence, read N- to C-terminus: Dephospho-CoA kinase (204 aa).

Residues 4–201 enclose the DPCK domain; it reads VIGLTGGIAS…EKYLAMCKKN (198 aa). 12-17 provides a ligand contact to ATP; the sequence is ASGKTT.

Belongs to the CoaE family.

It localises to the cytoplasm. It catalyses the reaction 3'-dephospho-CoA + ATP = ADP + CoA + H(+). It participates in cofactor biosynthesis; coenzyme A biosynthesis; CoA from (R)-pantothenate: step 5/5. Its function is as follows. Catalyzes the phosphorylation of the 3'-hydroxyl group of dephosphocoenzyme A to form coenzyme A. The chain is Dephospho-CoA kinase from Vibrio parahaemolyticus serotype O3:K6 (strain RIMD 2210633).